A 444-amino-acid polypeptide reads, in one-letter code: tRNA modification GTPase MnmE (444 aa).

(6S)-5-formyl-5,6,7,8-tetrahydrofolate-binding residues include arginine 24, glutamate 81, and lysine 121. The 151-residue stretch at 218 to 368 (GLTVVIAGPP…LLDALVGFAR (151 aa)) folds into the TrmE-type G domain. GTP contacts are provided by residues 228-233 (NAGKST), 247-253 (SPQAGTT), 272-275 (DTAG), and 349-351 (SAR). Mg(2+) is bound by residues serine 232 and threonine 253. A (6S)-5-formyl-5,6,7,8-tetrahydrofolate-binding site is contributed by lysine 444.

Belongs to the TRAFAC class TrmE-Era-EngA-EngB-Septin-like GTPase superfamily. TrmE GTPase family. As to quaternary structure, homodimer. Heterotetramer of two MnmE and two MnmG subunits. It depends on K(+) as a cofactor.

It is found in the cytoplasm. Functionally, exhibits a very high intrinsic GTPase hydrolysis rate. Involved in the addition of a carboxymethylaminomethyl (cmnm) group at the wobble position (U34) of certain tRNAs, forming tRNA-cmnm(5)s(2)U34. This is tRNA modification GTPase MnmE from Bradyrhizobium sp. (strain ORS 278).